Consider the following 185-residue polypeptide: Ribosome-recycling factor (185 aa).

This sequence belongs to the RRF family.

The protein localises to the cytoplasm. Its function is as follows. Responsible for the release of ribosomes from messenger RNA at the termination of protein biosynthesis. May increase the efficiency of translation by recycling ribosomes from one round of translation to another. This is Ribosome-recycling factor from Streptococcus pyogenes serotype M28 (strain MGAS6180).